The chain runs to 128 residues: Large ribosomal subunit protein bL17 (128 aa).

This sequence belongs to the bacterial ribosomal protein bL17 family. Part of the 50S ribosomal subunit. Contacts protein L32.

The protein is Large ribosomal subunit protein bL17 of Streptococcus pyogenes serotype M5 (strain Manfredo).